Reading from the N-terminus, the 396-residue chain is Na(+)/H(+) antiporter NhaA 1 (396 aa).

A run of 12 helical transmembrane segments spans residues 9 to 29 (LHNE…AMLI), 59 to 79 (LLLW…GLEL), 95 to 115 (VLPV…YVMF), 125 to 145 (GWAV…ALLG), 154 to 174 (LFLL…IAIF), 177 to 197 (SDLS…LFLL), 200 to 220 (IGVK…VAVL), 223 to 243 (GVHA…KGET), 260 to 280 (VVGL…SLAG), 281 to 301 (LGLN…LLLG), 332 to 352 (GVAL…SLAF), and 373 to 393 (ILSG…FSLA).

The protein belongs to the NhaA Na(+)/H(+) (TC 2.A.33) antiporter family.

The protein localises to the cell inner membrane. The enzyme catalyses Na(+)(in) + 2 H(+)(out) = Na(+)(out) + 2 H(+)(in). Na(+)/H(+) antiporter that extrudes sodium in exchange for external protons. This chain is Na(+)/H(+) antiporter NhaA 1, found in Magnetococcus marinus (strain ATCC BAA-1437 / JCM 17883 / MC-1).